Here is a 212-residue protein sequence, read N- to C-terminus: Thymidylate kinase (212 aa).

Ala-2 carries the N-acetylalanine modification. Residues 16–21 and Arg-97 each bind ATP; that span reads RAGKTT. Positions 133–157 are LID; sequence LQLQLLDAAARGEFGLERYETGTFQ. ATP contacts are provided by Lys-182 and Arg-192.

This sequence belongs to the thymidylate kinase family. As to quaternary structure, homodimer. Requires Mg(2+) as cofactor.

The catalysed reaction is dTMP + ATP = dTDP + ADP. It functions in the pathway pyrimidine metabolism; dTTP biosynthesis. Catalyzes the phosphorylation of thymidine monophosphate (dTMP) to thymidine diphosphate (dTDP), the immediate precursor for the DNA building block dTTP, with ATP as the preferred phosphoryl donor in the presence of Mg(2+). This chain is Thymidylate kinase (Dtymk), found in Mus musculus (Mouse).